We begin with the raw amino-acid sequence, 479 residues long: Solute carrier family 46 member 2 (479 aa).

The Cytoplasmic portion of the chain corresponds to 1–23; it reads MGPGGTCPWSSRLSGFRVRTWIE. Residues 24-44 form a helical membrane-spanning segment; it reads PVVASTQVAGSLYDAGLLLVV. Residues 45 to 80 are Extracellular-facing; that stretch reads KESFKSEAGGSSNYSANQSLVEYQEDQQQKAISNFN. 2 N-linked (GlcNAc...) asparagine glycosylation sites follow: N57 and N61. Residues 81-101 form a helical membrane-spanning segment; it reads IIYNLVLGLTPLLSAYGLGWL. Residues 102 to 110 lie on the Cytoplasmic side of the membrane; that stretch reads SDRYHRKIS. The helical transmembrane segment at 111-131 threads the bilayer; the sequence is ICTAMLGFLLSRIGLLLKVML. The Extracellular portion of the chain corresponds to 132 to 140; the sequence is DWPVEVMYG. Residues 141-161 form a helical membrane-spanning segment; that stretch reads AAALNGLCGSFSAYWSGVMAL. The Cytoplasmic portion of the chain corresponds to 162 to 174; sequence GSLGCSEGRRSVR. The helical transmembrane segment at 175–195 threads the bilayer; that stretch reads LILIDLVLGLAGFSGSMASGH. Topologically, residues 196 to 207 are extracellular; it reads LFKQIVGHSAQG. Residues 208-228 form a helical membrane-spanning segment; sequence LLLTACSVGCAAFALFYSLFV. Residues 229 to 281 are Cytoplasmic-facing; it reads LKVPESKPNKVHPTVDTVSGMMGTYRTLDPDQQDKQNVPRNPRTPGKGKSSQR. The disordered stretch occupies residues 255–277; sequence TLDPDQQDKQNVPRNPRTPGKGK. Residues 282 to 302 traverse the membrane as a helical segment; it reads EVVALLFVGAIIYDLAAVGTV. The Extracellular segment spans residues 303-321; that stretch reads DVMALFVLKEPLHWNQVQL. The chain crosses the membrane as a helical span at residues 322 to 342; it reads GYGMASGYIIFITSFLGVLVF. Topologically, residues 343 to 348 are cytoplasmic; it reads SRCFRD. The chain crosses the membrane as a helical span at residues 349–369; that stretch reads TTMIIIGMLSFGSGALLLAFV. The Extracellular portion of the chain corresponds to 370–371; the sequence is KE. A helical transmembrane segment spans residues 372–392; that stretch reads TYMFYIARAIMLFALIPITTI. The Cytoplasmic segment spans residues 393–407; sequence RSAMSKLIKDSSYGK. A helical membrane pass occupies residues 408 to 428; sequence IFVILQLCLTLTGVVTSTIYN. Residues 429–441 are Extracellular-facing; it reads KIYQLTLDKFIGT. The helical transmembrane segment at 442–462 threads the bilayer; that stretch reads CFVLSSFLSFLAIVPIGVVAY. Topologically, residues 463 to 479 are cytoplasmic; the sequence is KQVPRSQQGECAEKQRS.

It belongs to the major facilitator superfamily. SLC46A family. Glycosylated. As to expression, expressed on cortical epithelial cells in the thymus. Mainly expressed in the thymic cortex and is highly enriched in SCID thymus. Also expressed in lymph nodes, heart, fetal liver, brain, spleen, intestine and kidney, but not in adult liver, skin, skeletal muscle and lung. Expressed in skin epidermis.

The protein localises to the endosome membrane. Its subcellular location is the cell membrane. It carries out the reaction N-acetyl-beta-D-glucosaminyl-(1-&gt;4)-1,6-anhydro-N-acetyl-beta-D-muramoyl-L-alanyl-gamma-D-glutamyl-meso-2,6-diaminopimeloyl-D-alanine(out) + n H(+)(out) = N-acetyl-beta-D-glucosaminyl-(1-&gt;4)-1,6-anhydro-N-acetyl-beta-D-muramoyl-L-alanyl-gamma-D-glutamyl-meso-2,6-diaminopimeloyl-D-alanine(in) + n H(+)(in). It catalyses the reaction L-alanyl-gamma-D-glutamyl-meso-2,6-diaminopimelate(out) + n H(+)(out) = L-alanyl-gamma-D-glutamyl-meso-2,6-diaminopimelate(in) + n H(+)(in). The enzyme catalyses N-acetyl-D-muramoyl-L-alanyl-D-isoglutamine(out) + n H(+)(out) = N-acetyl-D-muramoyl-L-alanyl-D-isoglutamine(in) + n H(+)(in). The catalysed reaction is 2',3'-cGAMP(out) + n H(+)(out) = 2',3'-cGAMP(in) + n H(+)(in). It carries out the reaction 3',3'-cGAMP(out) + n H(+)(out) = 3',3'-cGAMP(in) + n H(+)(in). Its activity is regulated as follows. Down-regulated by the anti-inflammatory drug methotrexate. In terms of biological role, proton-coupled transporter that delivers pathogen-associated or danger-associated molecular patterns to cytosolic pattern recognition receptors as part of the innate immune response to microbes or tissue injury. Has selectivity toward muropeptides that contain the amino acid diaminopimelic acid (DAP-type peptidoglycan muropeptides) including Tri-DAP and tracheal toxin (TCT), common in Gram-negative bacteria and Gram-positive bacilli. In the context of immune recognition of skin microbiota, shuttles bacterial muropeptides across the endolysosomal membranes into the cytosol for recognition by NOD1, triggering MYD88-dependent secretion of IL1A and neutrophil recruitment in a pyroptosis-type inflammatory process. To a lesser extent and redundantly, transports muramyl dipeptides derived from most bacterial proteoglycans, eliciting NOD2 receptor activation and downstream inflammatory responses. Postulated to function as an importer of cyclic GMP-AMP dinucleotides (cGAMPs) in monocyte and macrophage cell lineages. Selectively imports cGAMPs derived from pathogenic bacteria such as 3'3'-cGAMP thus providing for differential immune recognition of pathogenic versus commensal bacteria. During tumorigenesis may transport extracellular tumor-derived 2'3'-cGAMP across the plasma membrane of M1-polarized macrophages to activate the anti-tumoral stimulator of interferon genes (STING) pathway. The transport mechanism, its electrogenicity and stoichiometry remain to be elucidated. The sequence is that of Solute carrier family 46 member 2 from Mus musculus (Mouse).